A 347-amino-acid chain; its full sequence is 4-hydroxy-2-oxovalerate aldolase 2 (347 aa).

In terms of domain architecture, Pyruvate carboxyltransferase spans 7-259 (VRITDTSLRD…KTGIDFFDIA (253 aa)). 15-16 (RD) contacts substrate. Asp-16 serves as a coordination point for Mn(2+). His-19 functions as the Proton acceptor in the catalytic mechanism. Substrate-binding residues include Ser-169 and His-198. Mn(2+) contacts are provided by His-198 and His-200. Tyr-289 is a substrate binding site.

It belongs to the 4-hydroxy-2-oxovalerate aldolase family.

The catalysed reaction is (S)-4-hydroxy-2-oxopentanoate = acetaldehyde + pyruvate. The chain is 4-hydroxy-2-oxovalerate aldolase 2 from Mycobacterium ulcerans (strain Agy99).